We begin with the raw amino-acid sequence, 505 residues long: Amidophosphoribosyltransferase (505 aa).

The active-site Nucleophile is the Cys-2. Residues 2-236 (CGIVGIAGVM…PGEAIYITEE (235 aa)) enclose the Glutamine amidotransferase type-2 domain. Positions 305, 367, and 368 each coordinate Mg(2+).

The protein in the C-terminal section; belongs to the purine/pyrimidine phosphoribosyltransferase family. As to quaternary structure, homotetramer. Requires Mg(2+) as cofactor.

It carries out the reaction 5-phospho-beta-D-ribosylamine + L-glutamate + diphosphate = 5-phospho-alpha-D-ribose 1-diphosphate + L-glutamine + H2O. It participates in purine metabolism; IMP biosynthesis via de novo pathway; N(1)-(5-phospho-D-ribosyl)glycinamide from 5-phospho-alpha-D-ribose 1-diphosphate: step 1/2. With respect to regulation, inhibited by iodoacetamide and by the glutamine analogs chloroketone and DON. Functionally, catalyzes the formation of phosphoribosylamine from phosphoribosylpyrophosphate (PRPP) and glutamine. Can also use NH(3) in place of glutamine. In Escherichia coli (strain K12), this protein is Amidophosphoribosyltransferase.